The following is a 177-amino-acid chain: Peptide methionine sulfoxide reductase MsrA (177 aa).

Residue C11 is part of the active site.

The protein belongs to the MsrA Met sulfoxide reductase family.

It carries out the reaction L-methionyl-[protein] + [thioredoxin]-disulfide + H2O = L-methionyl-(S)-S-oxide-[protein] + [thioredoxin]-dithiol. The enzyme catalyses [thioredoxin]-disulfide + L-methionine + H2O = L-methionine (S)-S-oxide + [thioredoxin]-dithiol. Functionally, has an important function as a repair enzyme for proteins that have been inactivated by oxidation. Catalyzes the reversible oxidation-reduction of methionine sulfoxide in proteins to methionine. This is Peptide methionine sulfoxide reductase MsrA from Trichodesmium erythraeum (strain IMS101).